The chain runs to 317 residues: N-acetyl-gamma-glutamyl-phosphate reductase (317 aa).

The active site involves Cys136.

The protein belongs to the NAGSA dehydrogenase family. Type 1 subfamily.

It is found in the cytoplasm. The catalysed reaction is N-acetyl-L-glutamate 5-semialdehyde + phosphate + NADP(+) = N-acetyl-L-glutamyl 5-phosphate + NADPH + H(+). Its pathway is amino-acid biosynthesis; L-arginine biosynthesis; N(2)-acetyl-L-ornithine from L-glutamate: step 3/4. In terms of biological role, catalyzes the NADPH-dependent reduction of N-acetyl-5-glutamyl phosphate to yield N-acetyl-L-glutamate 5-semialdehyde. The sequence is that of N-acetyl-gamma-glutamyl-phosphate reductase from Stenotrophomonas maltophilia (strain R551-3).